The primary structure comprises 241 residues: Phosphoadenosine 5'-phosphosulfate reductase (241 aa).

The active-site Nucleophile; cysteine thiosulfonate intermediate is the cysteine 235.

Belongs to the PAPS reductase family. CysH subfamily.

Its subcellular location is the cytoplasm. It carries out the reaction [thioredoxin]-disulfide + sulfite + adenosine 3',5'-bisphosphate + 2 H(+) = [thioredoxin]-dithiol + 3'-phosphoadenylyl sulfate. Its pathway is sulfur metabolism; hydrogen sulfide biosynthesis; sulfite from sulfate: step 3/3. Functionally, catalyzes the formation of sulfite from phosphoadenosine 5'-phosphosulfate (PAPS) using thioredoxin as an electron donor. The sequence is that of Phosphoadenosine 5'-phosphosulfate reductase from Xanthomonas oryzae pv. oryzae (strain MAFF 311018).